A 115-amino-acid polypeptide reads, in one-letter code: UPF0738 protein SACOL1009 (115 aa).

Belongs to the UPF0738 family.

This is UPF0738 protein SACOL1009 from Staphylococcus aureus (strain COL).